Reading from the N-terminus, the 107-residue chain is Transcriptional regulator Rv3488 (107 aa).

His-16, Glu-30, His-34, and His-101 together coordinate Cd(2+).

As to quaternary structure, homodimer.

Functionally, may have transcription regulation and metal-detoxifying functions through which it may enhance intracellular survival of mycobacteria. Binds to its own promoter region and to the Rv1999c promoter region. It displays strong affinity for cadmium ions, but can also bind zinc, manganese and nickel. Expression increases the intracellular survival of recombinant M.smegmatis in murine macrophage cell line and increases its tolerance to cadmium ions. The chain is Transcriptional regulator Rv3488 from Mycobacterium tuberculosis (strain ATCC 25618 / H37Rv).